A 75-amino-acid polypeptide reads, in one-letter code: MAFLKKCLFLVLFLGLVSLSICEEEKREEENEEVQEDDDQSEEKRGFLDVIKHVGKAAGKAALNAVTEMVNQGEQ.

The N-terminal stretch at 1 to 22 (MAFLKKCLFLVLFLGLVSLSIC) is a signal peptide. The propeptide occupies 23 to 43 (EEEKREEENEEVQEDDDQSEE). The interval 25–44 (EKREEENEEVQEDDDQSEEK) is disordered. The span at 30-41 (ENEEVQEDDDQS) shows a compositional bias: acidic residues. Gln-72 bears the Glutamine amide mark. Positions 74–75 (EQ) are excised as a propeptide.

Expressed by the skin glands.

The protein localises to the secreted. In terms of biological role, has antimicrobial activity. This is Cruzioseptin-8 from Cruziohyla calcarifer (Splendid leaf frog).